Here is a 212-residue protein sequence, read N- to C-terminus: MKPYTQTTGLVAPLDRANVDTDQIIPKQFLKSIKRTGFGPNLFDEWRYLDVGQPGQDNSKRPLNPDFVLNQPRYQGASVLLARENFGCGSSREHAPWALDEYGFRTVIAPSYADIFFNNSFKNGLLPIILPEAEVDELFRQVEANEGYQLSIDLAAQTVTRPDGKVLGFEVDPFRKHCLLNGLDDIGLTLQDADAIRAFEDGYRQQQPWLFR.

The protein belongs to the LeuD family. LeuD type 1 subfamily. As to quaternary structure, heterodimer of LeuC and LeuD.

It carries out the reaction (2R,3S)-3-isopropylmalate = (2S)-2-isopropylmalate. It functions in the pathway amino-acid biosynthesis; L-leucine biosynthesis; L-leucine from 3-methyl-2-oxobutanoate: step 2/4. Functionally, catalyzes the isomerization between 2-isopropylmalate and 3-isopropylmalate, via the formation of 2-isopropylmaleate. This is 3-isopropylmalate dehydratase small subunit from Pseudomonas aeruginosa (strain LESB58).